The primary structure comprises 132 residues: Myelin P2 protein (132 aa).

Serine 2 bears the N-acetylserine mark. Arginine 107 contributes to the (9Z)-octadecenoate binding site. Arginine 107 lines the hexadecanoate pocket. Cysteines 118 and 125 form a disulfide. Residue 127–129 (RIY) participates in (9Z)-octadecenoate binding. Position 127 to 129 (127 to 129 (RIY)) interacts with hexadecanoate.

Belongs to the calycin superfamily. Fatty-acid binding protein (FABP) family. In terms of assembly, monomer. Detected in spinal cord (at protein level).

It localises to the cytoplasm. May play a role in lipid transport protein in Schwann cells. May bind cholesterol. This chain is Myelin P2 protein (PMP2), found in Equus caballus (Horse).